Reading from the N-terminus, the 416-residue chain is Gamma-glutamyl phosphate reductase (416 aa).

This sequence belongs to the gamma-glutamyl phosphate reductase family.

It is found in the cytoplasm. It catalyses the reaction L-glutamate 5-semialdehyde + phosphate + NADP(+) = L-glutamyl 5-phosphate + NADPH + H(+). Its pathway is amino-acid biosynthesis; L-proline biosynthesis; L-glutamate 5-semialdehyde from L-glutamate: step 2/2. Its function is as follows. Catalyzes the NADPH-dependent reduction of L-glutamate 5-phosphate into L-glutamate 5-semialdehyde and phosphate. The product spontaneously undergoes cyclization to form 1-pyrroline-5-carboxylate. The sequence is that of Gamma-glutamyl phosphate reductase from Leptospira borgpetersenii serovar Hardjo-bovis (strain JB197).